We begin with the raw amino-acid sequence, 340 residues long: Probable allantoicase (340 aa).

The protein belongs to the allantoicase family.

The enzyme catalyses allantoate + H2O = (S)-ureidoglycolate + urea. The protein operates within nitrogen metabolism; (S)-allantoin degradation; (S)-ureidoglycolate from allantoate (aminidohydrolase route): step 1/1. The sequence is that of Probable allantoicase from Rhizobium meliloti (strain 1021) (Ensifer meliloti).